Reading from the N-terminus, the 964-residue chain is Glycine dehydrogenase (decarboxylating) (964 aa).

A compositionally biased stretch (polar residues) spans 1-10 (MNSTLQNRNR). The disordered stretch occupies residues 1–25 (MNSTLQNRNRTNLERVSTDPLDTFP). Lys-713 is subject to N6-(pyridoxal phosphate)lysine.

Belongs to the GcvP family. In terms of assembly, the glycine cleavage system is composed of four proteins: P, T, L and H. Requires pyridoxal 5'-phosphate as cofactor.

The catalysed reaction is N(6)-[(R)-lipoyl]-L-lysyl-[glycine-cleavage complex H protein] + glycine + H(+) = N(6)-[(R)-S(8)-aminomethyldihydrolipoyl]-L-lysyl-[glycine-cleavage complex H protein] + CO2. Functionally, the glycine cleavage system catalyzes the degradation of glycine. The P protein binds the alpha-amino group of glycine through its pyridoxal phosphate cofactor; CO(2) is released and the remaining methylamine moiety is then transferred to the lipoamide cofactor of the H protein. This is Glycine dehydrogenase (decarboxylating) from Leptospira borgpetersenii serovar Hardjo-bovis (strain JB197).